The chain runs to 321 residues: Flagellin C (321 aa).

This sequence belongs to the bacterial flagellin family.

It is found in the secreted. The protein localises to the bacterial flagellum. Flagellin is the subunit protein which polymerizes to form the filaments of bacterial flagella. The polypeptide is Flagellin C (flaC) (Rhizobium meliloti (strain 1021) (Ensifer meliloti)).